Here is a 129-residue protein sequence, read N- to C-terminus: M-zodatoxin-Lt8i (129 aa).

A signal peptide spans 1–20 (MKYFVVALALVAAFACIAES). A propeptide spanning residues 21–60 (KPAESEHELAEVEEENELADLEDAVWLEHLADLSDLEEAR) is cleaved from the precursor.

The protein belongs to the cationic peptide 06 (cytoinsectotoxin) family. In terms of tissue distribution, expressed by the venom gland.

It localises to the secreted. Functionally, insecticidal, cytolytic and antimicrobial peptide. Forms voltage-dependent, ion-permeable channels in membranes. At high concentration causes cell membrane lysis. The protein is M-zodatoxin-Lt8i (cit 1-6) of Lachesana tarabaevi (Spider).